A 1007-amino-acid polypeptide reads, in one-letter code: MEVFPLLFFLSFWWSRTWDLATSDSIIHIGAIFDESAKKDDEVFRTAVGDLNQNEEILQTEKITFSVTFVDGNNPFQAVQEACELMNQGILALVSSIGCTSAGSLQSLADAMHIPHLFIQRSTAGTPRSGCGLTRSNRNDDYTLSVRPPVYLNEVILRVVTEYAWQKFIIFYDSEYDIRGIQEFLDKVSQQGMDVALQKVENNINKMITTLFDTMRIEELNRYRDTLRRAILVMNPATAKSFISEVVETNLVAFDCHWIIINEEINDVDVQELVRRSIGRLTIIRQTFPVPQNISQRCFRGNHRISSTLCDPKDPFAQNMEISNLYIYDTVLLLANAFHKKLEDRKWHSMASLSCIRKNSKPWQGGRSMLETIKKGGVNGLTGDLEFGENGGNPNVHFEILGTNYGEELGRGVRKLGCWNPVTGLNGSLTDKKLENNMRGVVLRVVTVLEEPFVMVSENVLGKPKKYQGFSIDVLDALSNYLGFNYEIYVAPDHKYGSPQEDGTWNGLVGELVFKRADIGISALTITPDRENVVDFTTRYMDYSVGVLLRRAEKTVDMFACLAPFDLSLWACIAGTVLLVGLLVYLLNWLNPPRLQMGSMTSTTLYNSMWFVYGSFVQQGGEVPYTTLATRMMMGAWWLFALIVISSYTANLAAFLTITRIESSIQSLQDLSKQTDIPYGTVLDSAVYQHVRMKGLNPFERDSMYSQMWRMINRSNGSENNVLESQAGIQKVKYGNYAFVWDAAVLEYVAINDPDCSFYTVGNTVADRGYGIALQHGSPYRDVFSQRILELQQSGDMDILKHKWWPKNGQCDLYSSVDAKQKGGALDIKSLAGVFCILAAGIVLSCLIAVLETWWSRRKGSRVPSKEDDKEIDLEHLHRRVNSLCTDDDSPHKQFSTSSIDLTPLDIDTLPTRQALEQISDFRNTHITTTTFIPEQIQTLSRTLSAKAASGFTFGSVPEHRTGPFRHRAPNGGFFRSPIKTMSSIPYQPTPTLGLNLGNDPDRGTSI.

An N-terminal signal peptide occupies residues 1–23 (MEVFPLLFFLSFWWSRTWDLATS). The segment at 24-345 (DSIIHIGAIF…NAFHKKLEDR (322 aa)) is interaction with CBLN1 homotrimer. The Extracellular portion of the chain corresponds to 24-566 (DSIIHIGAIF…DMFACLAPFD (543 aa)). Cystine bridges form between cysteine 83/cysteine 355, cysteine 99/cysteine 131, and cysteine 298/cysteine 310. N-linked (GlcNAc...) asparagine glycosylation occurs at asparagine 293. N-linked (GlcNAc...) asparagine glycosylation is present at asparagine 426. Residues 567–587 (LSLWACIAGTVLLVGLLVYLL) form a helical membrane-spanning segment. The Cytoplasmic segment spans residues 588–635 (NWLNPPRLQMGSMTSTTLYNSMWFVYGSFVQQGGEVPYTTLATRMMMG). A helical membrane pass occupies residues 636–656 (AWWLFALIVISSYTANLAAFL). The Extracellular portion of the chain corresponds to 657 to 830 (TITRIESSIQ…QKGGALDIKS (174 aa)). N-linked (GlcNAc...) asparagine glycosylation is found at asparagine 713 and asparagine 716. Residues 831–851 (LAGVFCILAAGIVLSCLIAVL) traverse the membrane as a helical segment. Residues 852-1007 (ETWWSRRKGS…GNDPDRGTSI (156 aa)) are Cytoplasmic-facing. Serine 883 is subject to Phosphoserine. At threonine 886 the chain carries Phosphothreonine. Serine 890 is subject to Phosphoserine. An interaction with AP4M1 region spans residues 921-991 (DFRNTHITTT…MSSIPYQPTP (71 aa)). The PDZ-binding motif lies at 1005–1007 (TSI). A Phosphoserine modification is found at serine 1006.

Belongs to the glutamate-gated ion channel (TC 1.A.10.1) family. GRID2 subfamily. In terms of assembly, tetramer; dimer of dimers. Interacts with AP4M1. Interacts with EML2. Interacts with MAGI2 (via PDZ domains). Interacts with BECN1, GOPC, GRID2IP, SHANK1 and SHANK2. Interacts with CBLN2, but not with CBLN4. Interacts with CBLN1 (via C1q domain); the interaction is CBLN1-NRX1 complex formation-dependent; CBLN1-binding is calcium-independent; CBLN1 hexamers anchor GRID2 N-terminal domain dimers to monomeric NRXN1 isoform beta; promotes synaptogenesis and mediates the D-Serine-dependent long term depression signals and AMPA receptor endocytosis. As to expression, expressed at high levels in the cerebellar Purkinje cell layer, almost absent in the forebrain.

The protein resides in the postsynaptic cell membrane. The enzyme catalyses Ca(2+)(in) = Ca(2+)(out). It catalyses the reaction Na(+)(in) = Na(+)(out). Functionally, member of the ionotropic glutamate receptor family, which plays a crucial role in synaptic organization and signal transduction in the central nervous system. Although it shares structural features with ionotropic glutamate receptors, does not bind glutamate as a primary ligand. Promotes synaptogenesis and mediates the D-Serine-dependent long term depression signals and AMPA receptor endocytosis of cerebellar parallel fiber-Purkinje cell (PF-PC) synapses through the NRX1B-CBLN1-GRID2 triad complex. In the presence of neurexins and cerebellins, forms cation-selective channels that are proposed to be gated by glycine and D-serine. However, recent research disputes this ligand-gated cation channel activity. Cation-selective ion channel activity can be triggered by GRM1 in Purkinje cells. The chain is Glutamate receptor ionotropic, delta-2 (Grid2) from Rattus norvegicus (Rat).